The chain runs to 582 residues: Hydrogen peroxide stress regulator 1 (582 aa).

Disordered stretches follow at residues 24–55 (SPFA…HNSS), 107–154 (YPSA…GISK), 347–366 (TSYN…SGET), and 375–422 (NTSG…GGKS). The span at 107–125 (YPSASFSTSQHPSQVYNDG) shows a compositional bias: polar residues. Residues 126–143 (STLNSNNTTQQLNNNNGF) show a composition bias toward low complexity. Polar residues predominate over residues 375–392 (NTSGRSPNSMEATEQIGT). A C2H2-type 1 zinc finger spans residues 423 to 446 (FVCPECSKKFKRSEHLRRHIRSLH). A C2H2-type 2; atypical zinc finger spans residues 452–473 (FVCICGKRFSRRDNLRQHERLH).

Its subcellular location is the nucleus. In terms of biological role, transcription factor that globally supports gene expression in response to hydrogen peroxide. In Schizosaccharomyces pombe (strain 972 / ATCC 24843) (Fission yeast), this protein is Hydrogen peroxide stress regulator 1 (hsr1).